A 413-amino-acid chain; its full sequence is Serine/threonine transporter SstT (413 aa).

The next 9 helical transmembrane spans lie at 15-35 (NIVIQILIGIIAGVALATLAP), 48-68 (FVSALKAVAPILVFILVAASI), 82-102 (VIVLYLVGTFCASLTAVVMSF), 141-161 (ALMTGNFIGILGWAVALGLGL), 178-198 (CISAIVTVVIRFAPIGIFGLV), 216-236 (LLAVLLGSMAFIALIVNPLIV), 290-310 (IPLGATINMAGAAITITVLTL), 330-350 (LVAAVSACGASGVAGGSLLLI), and 357-377 (FGISNDIAMQVVAIGFIIGVV).

This sequence belongs to the dicarboxylate/amino acid:cation symporter (DAACS) (TC 2.A.23) family.

The protein resides in the cell inner membrane. The catalysed reaction is L-serine(in) + Na(+)(in) = L-serine(out) + Na(+)(out). It carries out the reaction L-threonine(in) + Na(+)(in) = L-threonine(out) + Na(+)(out). Its function is as follows. Involved in the import of serine and threonine into the cell, with the concomitant import of sodium (symport system). This is Serine/threonine transporter SstT from Aliivibrio fischeri (strain ATCC 700601 / ES114) (Vibrio fischeri).